Reading from the N-terminus, the 953-residue chain is Isoleucine--tRNA ligase (953 aa).

The 'HIGH' region signature appears at 61-71 (PYANGALHIGH). Glu-564 contacts L-isoleucyl-5'-AMP. The 'KMSKS' region motif lies at 605–609 (KMSKS). Position 608 (Lys-608) interacts with ATP. The Zn(2+) site is built by Cys-922, Cys-925, Cys-942, and Cys-945.

Belongs to the class-I aminoacyl-tRNA synthetase family. IleS type 1 subfamily. As to quaternary structure, monomer. The cofactor is Zn(2+).

Its subcellular location is the cytoplasm. It carries out the reaction tRNA(Ile) + L-isoleucine + ATP = L-isoleucyl-tRNA(Ile) + AMP + diphosphate. In terms of biological role, catalyzes the attachment of isoleucine to tRNA(Ile). As IleRS can inadvertently accommodate and process structurally similar amino acids such as valine, to avoid such errors it has two additional distinct tRNA(Ile)-dependent editing activities. One activity is designated as 'pretransfer' editing and involves the hydrolysis of activated Val-AMP. The other activity is designated 'posttransfer' editing and involves deacylation of mischarged Val-tRNA(Ile). In Thermosynechococcus vestitus (strain NIES-2133 / IAM M-273 / BP-1), this protein is Isoleucine--tRNA ligase.